The primary structure comprises 117 residues: Multidrug resistance protein EbrB (117 aa).

4 consecutive transmembrane segments (helical) span residues 3–23 (GLLY…MLKL), 31–51 (WPIG…SFSL), 59–79 (AYAT…FLLF), and 81–101 (ETIS…VVVL).

Belongs to the drug/metabolite transporter (DMT) superfamily. Small multidrug resistance (SMR) (TC 2.A.7.1) family. EbrA/EbrB subfamily. In terms of assembly, the efflux pump is composed of EbrA and EbrB.

It is found in the cell membrane. Functionally, part of a multidrug efflux pump. Confers resistance to cationic lipophilic dyes such as ethidium bromide, acriflavine, pyronine Y and safranin O. The efflux is probably coupled to an influx of protons. In Bacillus atrophaeus, this protein is Multidrug resistance protein EbrB (ebrB).